Here is a 130-residue protein sequence, read N- to C-terminus: Small ribosomal subunit protein uS8 (130 aa).

Belongs to the universal ribosomal protein uS8 family. In terms of assembly, part of the 30S ribosomal subunit. Contacts proteins S5 and S12.

Functionally, one of the primary rRNA binding proteins, it binds directly to 16S rRNA central domain where it helps coordinate assembly of the platform of the 30S subunit. The chain is Small ribosomal subunit protein uS8 from Edwardsiella ictaluri (strain 93-146).